The primary structure comprises 313 residues: Cilia- and flagella-associated protein 36 (313 aa).

Phosphoserine is present on residues S85 and S147. Positions 147–187 form a coiled coil; that stretch reads SDLEQEEMKILKEVLRKSKEEYDQEEERKRKKQLSEAKTEE. Disordered stretches follow at residues 165 to 204 and 262 to 292; these read KEEYDQEEERKRKKQLSEAKTEEHPMQANETAKMSNSQGD and KIKQNQTSEQKGKPAGEVEEMTEKPEMTAEE. Positions 179–189 are enriched in basic and acidic residues; the sequence is QLSEAKTEEHP. Over residues 192–203 the composition is skewed to polar residues; sequence ANETAKMSNSQG. Phosphoserine is present on S201. Positions 271-292 are enriched in basic and acidic residues; sequence QKGKPAGEVEEMTEKPEMTAEE.

It belongs to the CFAP36 family. Interacts with ARL3.

It localises to the nucleus. The protein localises to the cytoplasm. Its subcellular location is the cell projection. The protein resides in the cilium. It is found in the flagellum. In terms of biological role, may act as an effector for ARL3. The chain is Cilia- and flagella-associated protein 36 from Bos taurus (Bovine).